Reading from the N-terminus, the 62-residue chain is Zinc finger-containing protein P28b (62 aa).

The RING-type; degenerate zinc-finger motif lies at 1 to 46 (MKLFTQNDRYFGLLDSCTHIFCITCINIWHKTRRETGASDNCPICR).

This chain is Zinc finger-containing protein P28b, found in Vaccinia virus (strain Western Reserve) (VACV).